Consider the following 2892-residue polypeptide: E3 ubiquitin-protein ligase lubel (2892 aa).

8 disordered regions span residues 23–55 (DRIG…KSTP), 125–252 (KQHM…QLEK), 395–423 (SQQH…QFGS), 483–631 (PSAA…ESEG), 644–672 (QKLQ…ENTQ), 685–737 (AHEE…PDHE), 757–865 (CCKT…DNSL), and 949–975 (DRFT…QQES). Positions 40 to 52 (GLPKAPALPPKAK) are enriched in low complexity. A compositionally biased stretch (gly residues) spans 189–198 (GWRGSLGGGA). Residues 206–215 (ATSSANQMNN) show a composition bias toward polar residues. 2 stretches are compositionally biased toward low complexity: residues 402–412 (AQHPHQALPQH) and 483–503 (PSAA…TPSR). Residues 516–528 (VDDELTDDEDSDQ) show a composition bias toward acidic residues. The span at 535 to 546 (VSNRSGMTSASR) shows a compositional bias: polar residues. The segment covering 547 to 560 (SQHHQNHIQPRQRR) has biased composition (basic residues). The segment covering 606 to 623 (GTLTRNKTATDSARTSRI) has biased composition (polar residues). Residues 647-670 (QEADQHKSSKKAEPKRKPEMKDEN) are compositionally biased toward basic and acidic residues. Polar residues predominate over residues 801–813 (KPTTKSQQPSQKS). Composition is skewed to low complexity over residues 818-837 (SKTT…AVNS) and 846-856 (KTPSKSTLKTS). Positions 1042–1187 (MHIILKELEL…LMRIWGSPNG (146 aa)) constitute a UBA-like 1 domain. Disordered stretches follow at residues 1214–1252 (LQPP…SPYQ), 1477–1520 (LPTA…KLET), 1557–1653 (AEVQ…KILS), 1717–2019 (STTI…NLSE), 2032–2082 (RDEI…EGNT), 2191–2316 (SAPP…PLRS), and 2411–2431 (DYET…EPQK). Positions 1241–1252 (VKSTYATPSPYQ) are enriched in polar residues. A compositionally biased stretch (basic and acidic residues) spans 1510–1519 (EELRQQEKLE). Polar residues predominate over residues 1560 to 1571 (QVQSDDQPSTSR). Residues 1576–1587 (RAKRSQQSRKGR) show a composition bias toward basic residues. A compositionally biased stretch (polar residues) spans 1595-1607 (PTNRTKLPNNIDQ). A compositionally biased stretch (basic and acidic residues) spans 1608–1627 (KVNESKTAAKETEAVKDKDL). Polar residues-rich tracts occupy residues 1630-1653 (AASN…KILS), 1717-1726 (STTISEQSEG), and 1764-1779 (KSPT…TSHI). The segment covering 1822-1834 (LSSSSLRSESRSS) has biased composition (low complexity). The span at 1859-1881 (TVSSPKSEQLSDNQEVNLVSQET) shows a compositional bias: polar residues. The span at 1918 to 1927 (DSDEVFEDAP) shows a compositional bias: acidic residues. Residues 1953–1963 (DGQRAETKSPE) show a composition bias toward basic and acidic residues. Composition is skewed to acidic residues over residues 1964–1975 (DEVVILLDEESQ) and 2036–2079 (SMDE…DGEE). Low complexity-rich tracts occupy residues 2214-2230 (PSEV…ALPI) and 2269-2291 (SGTA…TVSK). Residues 2297 to 2308 (NEPTNKSNSTPL) show a composition bias toward polar residues. Acidic residues predominate over residues 2411–2425 (DYETSATEEEQEEPN). The 57-residue stretch at 2457 to 2513 (DPAILARKYVDQELVTNIAEAQIAATLVSMKFSEDVALWAARECSDLDQAIAMLQQE) folds into the UBA-like 2 domain. Residues 2510 to 2748 (LQQECELCMN…LGLHAHHPRN (239 aa)) are TRIAD supradomain. Residues C2514, C2517, C2537, C2540, C2618, C2621, C2636, C2639, C2644, C2647, H2655, C2660, C2690, and C2693 each contribute to the Zn(2+) site. Residues 2514 to 2564 (CELCMNSYPMNQMVSMLKCLHKCCKQCAKSYFTVQITDRSINDCSCPFCKL) form an RING-type 1 zinc finger. The interval 2514–2892 (CELCMNSYPM…IKKHIPLKSA (379 aa)) is necessary for linear polyubiquitination and sufficent for inducing DptA in the intestine. The IBR-type zinc-finger motif lies at 2601–2660 (QRKLRDRSLLQDPNFKWCIQCSSGFFARPKQKRLICPDCGSVTCAQCRKPWERQHEGSSC). The segment at 2690–2720 (CPKCKFRYSLARGGCMHFTCTQCKFEFCYGC) adopts an RING-type 2; atypical zinc-finger fold. Residue C2704 is part of the active site. 2 residues coordinate Zn(2+): C2709 and C2712.

Belongs to the RBR family.

The enzyme catalyses [E2 ubiquitin-conjugating enzyme]-S-ubiquitinyl-L-cysteine + [acceptor protein]-L-lysine = [E2 ubiquitin-conjugating enzyme]-L-cysteine + [acceptor protein]-N(6)-ubiquitinyl-L-lysine.. E3 ubiquitin-protein ligase which conjugates linear 'Met-1'- and 'Lys-63'-linked polyubiquitin chains to substrates and plays a crucial role in the NF-kappa-B intestinal inflammatory response to oral infection and in the heat stress response. Preferentially interacts with 'Lys-63'-linked, and to a lesser extent 'Lys-48'-linked, polyubiquitin chains. Upon oral infection with a Gram-negative bacterium E.carotovora subsp. carotovora 15, functions with the E2 ubiquitin-conjugating enzyme Ubc10 to mediate the conjugation of 'Lys-63'- and linear 'Met-1'-linked polyubiquitin chains to the substrate key which is essential for activation of the NF-kappa-B signaling cascade in the adult intestinal epithelium. It is not required for systemic immune response to septic infection with either E.carotovora subsp. carotovora 15 or Gram-positive M.luteus bacteria. Function in controlling linear ubiquitination is also essential for regulating the heat stress response in adults. This function may require the E2 ubiquitin-conjugating enzymes Ubc10 or eff. This is E3 ubiquitin-protein ligase lubel from Drosophila melanogaster (Fruit fly).